The primary structure comprises 498 residues: NADPH:adrenodoxin oxidoreductase, mitochondrial (498 aa).

The N-terminal 37 residues, 1–37 (MSTHKAALCKVQILKLFLISARCVRITRFYGVCGLST), are a transit peptide targeting the mitochondrion. Alanine 54, glutamate 75, leucine 83, and valine 119 together coordinate FAD. NADP(+)-binding positions include 190–193 (QGNV), 234–235 (RR), and glutamate 246. FAD is bound by residues tryptophan 404 and 411–413 (GVI). Glycine 411 provides a ligand contact to NADP(+). Basic and acidic residues predominate over residues 469–488 (DSEETRRGETRGKPREKMLD). Positions 469-489 (DSEETRRGETRGKPREKMLDV) are disordered.

The protein belongs to the ferredoxin--NADP reductase type 1 family. FAD is required as a cofactor.

The protein resides in the mitochondrion inner membrane. The catalysed reaction is 2 reduced [adrenodoxin] + NADP(+) + H(+) = 2 oxidized [adrenodoxin] + NADPH. The protein operates within steroid metabolism; cholesterol metabolism. Its function is as follows. Serves as the first electron transfer protein in all the mitochondrial P450 systems including cholesterol side chain cleavage in all steroidogenic tissues, steroid 11-beta hydroxylation in the adrenal cortex, 25-OH-vitamin D3-24 hydroxylation in the kidney, and sterol C-27 hydroxylation in the liver. The chain is NADPH:adrenodoxin oxidoreductase, mitochondrial (fdxr) from Salvelinus fontinalis (Brook trout).